A 312-amino-acid chain; its full sequence is Acetyl-coenzyme A carboxylase carboxyl transferase subunit alpha (312 aa).

The 251-residue stretch at E36–A286 folds into the CoA carboxyltransferase C-terminal domain.

Belongs to the AccA family. Acetyl-CoA carboxylase is a heterohexamer composed of biotin carboxyl carrier protein (AccB), biotin carboxylase (AccC) and two subunits each of ACCase subunit alpha (AccA) and ACCase subunit beta (AccD).

It localises to the cytoplasm. The catalysed reaction is N(6)-carboxybiotinyl-L-lysyl-[protein] + acetyl-CoA = N(6)-biotinyl-L-lysyl-[protein] + malonyl-CoA. It participates in lipid metabolism; malonyl-CoA biosynthesis; malonyl-CoA from acetyl-CoA: step 1/1. Its function is as follows. Component of the acetyl coenzyme A carboxylase (ACC) complex. First, biotin carboxylase catalyzes the carboxylation of biotin on its carrier protein (BCCP) and then the CO(2) group is transferred by the carboxyltransferase to acetyl-CoA to form malonyl-CoA. The polypeptide is Acetyl-coenzyme A carboxylase carboxyl transferase subunit alpha (Sulfurovum sp. (strain NBC37-1)).